A 244-amino-acid chain; its full sequence is 5-oxoprolinase subunit A (244 aa).

It belongs to the LamB/PxpA family. Forms a complex composed of PxpA, PxpB and PxpC.

It catalyses the reaction 5-oxo-L-proline + ATP + 2 H2O = L-glutamate + ADP + phosphate + H(+). Functionally, catalyzes the cleavage of 5-oxoproline to form L-glutamate coupled to the hydrolysis of ATP to ADP and inorganic phosphate. The sequence is that of 5-oxoprolinase subunit A from Escherichia coli O17:K52:H18 (strain UMN026 / ExPEC).